The chain runs to 226 residues: NADH-ubiquinone oxidoreductase chain 6 (226 aa).

The next 5 membrane-spanning stretches (helical) occupy residues 2–22 (STLGLLLILLGIIITCTFVIL), 28–48 (IYSILNLIVIYGCYASILLTV), 56–76 (IYILVNVGAIAVLFLFIVMMI), 90–110 (YNIYMFVGFIGLIGIMGILIT), and 169–189 (IWFIMACIILLIGMVGVIYIT).

This sequence belongs to the complex I subunit 6 family.

Its subcellular location is the mitochondrion membrane. It catalyses the reaction a ubiquinone + NADH + 5 H(+)(in) = a ubiquinol + NAD(+) + 4 H(+)(out). Core subunit of the mitochondrial membrane respiratory chain NADH dehydrogenase (Complex I) that is believed to belong to the minimal assembly required for catalysis. Complex I functions in the transfer of electrons from NADH to the respiratory chain. The immediate electron acceptor for the enzyme is believed to be ubiquinone. This Dictyostelium citrinum (Slime mold) protein is NADH-ubiquinone oxidoreductase chain 6 (nad6).